The following is a 196-amino-acid chain: Transmembrane protein 126A (196 aa).

Topologically, residues Met-1–Glu-34 are mitochondrial matrix. A helical membrane pass occupies residues Tyr-35–Phe-55. Residues Arg-56–Arg-57 lie on the Mitochondrial intermembrane side of the membrane. The chain crosses the membrane as a helical span at residues Ile-58 to Leu-78. The Mitochondrial matrix portion of the chain corresponds to Thr-79–Arg-106. Residues Gly-107–Asn-127 traverse the membrane as a helical segment. The Mitochondrial intermembrane segment spans residues Gly-128–Lys-159. A helical membrane pass occupies residues Met-160 to Ser-176. Residues Arg-177–His-196 lie on the Mitochondrial matrix side of the membrane.

This sequence belongs to the TMEM126 family. Interacts with OXA1L; promoting cotranslational quality control in mitochondria. In the retina, significant levels of expression are detected in the ganglion cell layer, the optic nerve head, the outer plexiform layer, and in the outer ellipsoide length of photoreceptor inner segments.

It is found in the mitochondrion inner membrane. Functionally, protein required for the cotranslational protein quality control in the inner membrane of the mitochondria. Associates with newly synthesized polypeptides and may act as a chaperone that cooperates with OXA1L for the insertion of newly synthesized mitochondrial proteins into the inner membrane. Required for the assembly of the ND4 module of mitochondrial complex I. This Mus musculus (Mouse) protein is Transmembrane protein 126A.